The following is a 113-amino-acid chain: Insulin (113 aa).

An N-terminal signal peptide occupies residues 1–24 (MAALWLQAFSLLVLMMVSWPGSQA). 3 cysteine pairs are disulfide-bonded: cysteine 32–cysteine 99, cysteine 44–cysteine 112, and cysteine 98–cysteine 103. Positions 56–90 (DVDPLLGFLPPKAGGAVVQGGENEVTFKDQMEMMV) are cleaved as a propeptide — c peptide.

This sequence belongs to the insulin family. Heterodimer of a B chain and an A chain linked by two disulfide bonds.

It is found in the secreted. Insulin decreases blood glucose concentration. It increases cell permeability to monosaccharides, amino acids and fatty acids. It accelerates glycolysis, the pentose phosphate cycle, and glycogen synthesis in liver. This Oreochromis niloticus (Nile tilapia) protein is Insulin (ins).